We begin with the raw amino-acid sequence, 950 residues long: Zinc finger CCCH domain-containing protein 3 (950 aa).

4 disordered regions span residues 32–106 (GNSS…HPEP), 127–182 (IKPP…TKVG), 201–220 (VVKS…RTVS), and 314–489 (SEKS…VLRK). The span at 56-74 (RPSRRGFSSHHGPSWRKKY) shows a compositional bias: basic residues. Residues 76-96 (LVNQPVESSDPASDPAFQTSL) are compositionally biased toward polar residues. Over residues 327–338 (PRTTLESGNKAT) the composition is skewed to polar residues. Positions 344 to 360 (KTEKPQPKVDPEVRPEK) are enriched in basic and acidic residues. A compositionally biased stretch (low complexity) spans 370-388 (SPSKYKWKASSPSASSSSS). Positions 402–412 (SQLSPVPSRPT) are enriched in polar residues. At serine 405 the chain carries Phosphoserine. A compositionally biased stretch (basic residues) spans 438–449 (VKSRTKIIRRRG). The span at 460-470 (SPTTATTSKNH) shows a compositional bias: polar residues. 5 C3H1-type zinc fingers span residues 662 to 690 (EKKR…HDPE), 694 to 717 (VCTR…HHVS), 718 to 744 (KEKM…HVYV), 745 to 772 (SRKA…HTLL), and 773 to 795 (CPDF…HRNQ). The segment at 793 to 950 (RNQKRHGRRT…GKPLHIKPRL (158 aa)) is disordered. The span at 828–838 (PTTTQRSVRQM) shows a compositional bias: polar residues. The segment covering 839-849 (SSGLASGAEAP) has biased composition (low complexity). Serine 851 and serine 855 each carry phosphoserine. The span at 857-888 (RVLASTSTLSSKATAASSPSPSPSTSSPAPSL) shows a compositional bias: low complexity. Positions 914 to 928 (SLHSSPSPGGQTETG) are enriched in polar residues. Phosphoserine is present on residues serine 918, serine 920, and serine 934.

As to quaternary structure, interacts with SMAD1, SMAD3, SMAD4, CPSF2 and CPSF3.

The protein resides in the nucleus. Its function is as follows. Required for the export of polyadenylated mRNAs from the nucleus. Enhances ACVR1B-induced SMAD-dependent transcription. Binds to single-stranded DNA but not to double-stranded DNA in vitro. Involved in RNA cleavage. The chain is Zinc finger CCCH domain-containing protein 3 (Zc3h3) from Mus musculus (Mouse).